The sequence spans 645 residues: Threonine--tRNA ligase (645 aa).

One can recognise a TGS domain in the interval 1–63 (MEQINIQFPD…ETDGSIEIVT (63 aa)). The segment at 242–540 (DHRKIGKELE…LTEETKGAFP (299 aa)) is catalytic. Residues Cys-336, His-387, and His-517 each coordinate Zn(2+).

This sequence belongs to the class-II aminoacyl-tRNA synthetase family. Homodimer. The cofactor is Zn(2+).

It localises to the cytoplasm. It carries out the reaction tRNA(Thr) + L-threonine + ATP = L-threonyl-tRNA(Thr) + AMP + diphosphate + H(+). Its function is as follows. Catalyzes the attachment of threonine to tRNA(Thr) in a two-step reaction: L-threonine is first activated by ATP to form Thr-AMP and then transferred to the acceptor end of tRNA(Thr). Also edits incorrectly charged L-seryl-tRNA(Thr). The sequence is that of Threonine--tRNA ligase from Staphylococcus aureus (strain JH1).